The following is a 419-amino-acid chain: Tryptophan synthase beta chain (419 aa).

An N6-(pyridoxal phosphate)lysine modification is found at K98.

This sequence belongs to the TrpB family. In terms of assembly, tetramer of two alpha and two beta chains. Pyridoxal 5'-phosphate is required as a cofactor.

The catalysed reaction is (1S,2R)-1-C-(indol-3-yl)glycerol 3-phosphate + L-serine = D-glyceraldehyde 3-phosphate + L-tryptophan + H2O. It functions in the pathway amino-acid biosynthesis; L-tryptophan biosynthesis; L-tryptophan from chorismate: step 5/5. In terms of biological role, the beta subunit is responsible for the synthesis of L-tryptophan from indole and L-serine. This Ruegeria sp. (strain TM1040) (Silicibacter sp.) protein is Tryptophan synthase beta chain.